Here is a 523-residue protein sequence, read N- to C-terminus: Coatomer subunit delta-2 (523 aa).

Residues 218 to 243 (DSFASKPKGRPSAAATAPGKGLGMKL) are disordered. One can recognise an MHD domain in the interval 282-523 (SDPVTVTIEE…RLVTANYQVV (242 aa)).

It belongs to the adaptor complexes medium subunit family. Delta-COP subfamily. In terms of assembly, oligomeric complex that consists of at least the alpha, beta, beta', gamma, delta, epsilon and zeta subunits.

It localises to the cytoplasm. Its subcellular location is the golgi apparatus membrane. It is found in the cytoplasmic vesicle. The protein localises to the COPI-coated vesicle membrane. In terms of biological role, the coatomer is a cytosolic protein complex that binds to dilysine motifs and reversibly associates with Golgi non-clathrin-coated vesicles, which further mediate biosynthetic protein transport from the ER, via the Golgi up to the trans Golgi network. Coatomer complex is required for budding from Golgi membranes, and is essential for the retrograde Golgi-to-ER transport of dilysine-tagged proteins. This is Coatomer subunit delta-2 from Oryza sativa subsp. japonica (Rice).